Consider the following 955-residue polypeptide: Kinesin-like protein NACK2 (955 aa).

In terms of domain architecture, Kinesin motor spans 36-357 (KILVTIRVRP…LCFATSAKEV (322 aa)). An ATP-binding site is contributed by 120 to 127 (GQTSSGKT). 2 coiled-coil regions span residues 366–443 (VVAE…LKGS) and 566–604 (KASL…VMHL).

Belongs to the TRAFAC class myosin-kinesin ATPase superfamily. Kinesin family. KIN-7 subfamily.

Its subcellular location is the cytoplasm. The protein resides in the nucleus. It localises to the cytoskeleton. The protein localises to the phragmoplast. In terms of biological role, probable plus end-directed motor protein that may function in the NACK-PQR (NPK1-NQK1/MEK1-NRK1) MAP kinase signaling pathway, which is essential for somatic cell cytokinesis, especially for the cell-plate formation and its expansion. May regulate the activity and the localization of NPK1, probably by association through the non-catalytic region of the kinase. This chain is Kinesin-like protein NACK2 (NACK2), found in Nicotiana tabacum (Common tobacco).